The following is a 261-amino-acid chain: tRNA pseudouridine synthase A (261 aa).

Residue D52 is the Nucleophile of the active site. Y110 lines the substrate pocket.

This sequence belongs to the tRNA pseudouridine synthase TruA family. As to quaternary structure, homodimer.

The enzyme catalyses uridine(38/39/40) in tRNA = pseudouridine(38/39/40) in tRNA. In terms of biological role, formation of pseudouridine at positions 38, 39 and 40 in the anticodon stem and loop of transfer RNAs. In Blochmanniella pennsylvanica (strain BPEN), this protein is tRNA pseudouridine synthase A.